The chain runs to 244 residues: 2,5-diamino-6-ribosylamino-4(3H)-pyrimidinone 5'-phosphate reductase (244 aa).

Residues Thr-79, Asp-83, Val-159, and 182–186 (GANVI) each bind NADP(+).

This sequence belongs to the HTP reductase family. Homodimer.

The enzyme catalyses 2,5-diamino-6-(1-D-ribitylamino)pyrimidin-4(3H)-one 5'-phosphate + NADP(+) = 2,5-diamino-6-(1-D-ribosylamino)pyrimidin-4(3H)-one 5'-phosphate + NADPH + H(+). It catalyses the reaction 2,5-diamino-6-(1-D-ribitylamino)pyrimidin-4(3H)-one 5'-phosphate + NAD(+) = 2,5-diamino-6-(1-D-ribosylamino)pyrimidin-4(3H)-one 5'-phosphate + NADH + H(+). It participates in cofactor biosynthesis; riboflavin biosynthesis. Its function is as follows. Catalyzes an early step in riboflavin biosynthesis, the NADPH-dependent reduction of the ribose side chain of 2,5-diamino-6-ribosylamino-4(3H)-pyrimidinone 5'-phosphate, yielding 2,5-diamino-6-ribitylamino-4(3H)-pyrimidinone 5'-phosphate. In Saccharomyces cerevisiae (strain ATCC 204508 / S288c) (Baker's yeast), this protein is 2,5-diamino-6-ribosylamino-4(3H)-pyrimidinone 5'-phosphate reductase (RIB7).